Here is a 276-residue protein sequence, read N- to C-terminus: Putative non-heme chloroperoxidase (276 aa).

Residues 26 to 263 (PIVLIHGFPL…GGPHAINWTH (238 aa)) enclose the AB hydrolase-1 domain. Active-site residues include S99, D228, and H257.

This sequence belongs to the AB hydrolase superfamily. Bacterial non-heme haloperoxidase / perhydrolase family.

The protein is Putative non-heme chloroperoxidase of Synechocystis sp. (strain ATCC 27184 / PCC 6803 / Kazusa).